The chain runs to 94 residues: Virion membrane protein OPG135 (94 aa).

The signal sequence occupies residues 1 to 22 (MSCYTAILKSVGGLALFQVANG). Over 23 to 45 (AIDLCRHFFMYFCEQKLRPNSFW) the chain is Intravirion. The helical transmembrane segment at 46-66 (FVVVRAIASMIMYLVLGIALL) threads the bilayer. The Virion surface segment spans residues 67–83 (YISEQDNKKNTNNDKRN). The segment covering 74 to 84 (KKNTNNDKRNE) has biased composition (basic and acidic residues). The interval 74 to 94 (KKNTNNDKRNESSINSNSSPK) is disordered. N83 carries N-linked (GlcNAc...) asparagine; by host glycosylation. Residues 85-94 (SSINSNSSPK) show a composition bias toward polar residues.

It belongs to the oerthopoxvirus OPG135 family.

It localises to the virion membrane. The protein localises to the host cytoplasm. In terms of biological role, envelope protein. Required for an early step in virion morphogenesis. In Homo sapiens (Human), this protein is Virion membrane protein OPG135 (OPG135).